The sequence spans 206 residues: Small ribosomal subunit protein uS4 (206 aa).

One can recognise an S4 RNA-binding domain in the interval 96 to 158 (SRLDNVVYRM…AKKQSRIKAA (63 aa)).

Belongs to the universal ribosomal protein uS4 family. In terms of assembly, part of the 30S ribosomal subunit. Contacts protein S5. The interaction surface between S4 and S5 is involved in control of translational fidelity.

One of the primary rRNA binding proteins, it binds directly to 16S rRNA where it nucleates assembly of the body of the 30S subunit. Functionally, with S5 and S12 plays an important role in translational accuracy. In Wigglesworthia glossinidia brevipalpis, this protein is Small ribosomal subunit protein uS4.